Consider the following 374-residue polypeptide: Putative glutamate--cysteine ligase 2 (374 aa).

It belongs to the glutamate--cysteine ligase type 2 family. YbdK subfamily.

The enzyme catalyses L-cysteine + L-glutamate + ATP = gamma-L-glutamyl-L-cysteine + ADP + phosphate + H(+). Its function is as follows. ATP-dependent carboxylate-amine ligase which exhibits weak glutamate--cysteine ligase activity. The chain is Putative glutamate--cysteine ligase 2 from Paracidovorax citrulli (strain AAC00-1) (Acidovorax citrulli).